A 305-amino-acid polypeptide reads, in one-letter code: Probable GTP 3',8-cyclase (305 aa).

Residues 6 to 228 (NHRRPLVSLR…MTRKFMQDRK (223 aa)) form the Radical SAM core domain. Arg15 provides a ligand contact to GTP. [4Fe-4S] cluster-binding residues include Cys22 and Cys26. Tyr28 contributes to the S-adenosyl-L-methionine binding site. Cys29 is a binding site for [4Fe-4S] cluster. Arg62 is a GTP binding site. Gly66 is an S-adenosyl-L-methionine binding site. Residue Thr92 participates in GTP binding. Ser116 serves as a coordination point for S-adenosyl-L-methionine. Lys153 is a binding site for GTP. [4Fe-4S] cluster is bound by residues Cys249 and Cys252. 254-256 (RLR) contributes to the GTP binding site. Cys266 is a binding site for [4Fe-4S] cluster.

Belongs to the radical SAM superfamily. MoaA family. The cofactor is [4Fe-4S] cluster.

The enzyme catalyses GTP + AH2 + S-adenosyl-L-methionine = (8S)-3',8-cyclo-7,8-dihydroguanosine 5'-triphosphate + 5'-deoxyadenosine + L-methionine + A + H(+). Its pathway is cofactor biosynthesis; molybdopterin biosynthesis. In terms of biological role, catalyzes the cyclization of GTP to (8S)-3',8-cyclo-7,8-dihydroguanosine 5'-triphosphate. The chain is Probable GTP 3',8-cyclase from Methanothermobacter marburgensis (strain ATCC BAA-927 / DSM 2133 / JCM 14651 / NBRC 100331 / OCM 82 / Marburg) (Methanobacterium thermoautotrophicum).